The following is a 183-amino-acid chain: Peptidyl-tRNA hydrolase (183 aa).

A tRNA-binding site is contributed by tyrosine 14. The Proton acceptor role is filled by histidine 19. Tyrosine 61, asparagine 63, and asparagine 109 together coordinate tRNA.

It belongs to the PTH family. In terms of assembly, monomer.

It is found in the cytoplasm. It catalyses the reaction an N-acyl-L-alpha-aminoacyl-tRNA + H2O = an N-acyl-L-amino acid + a tRNA + H(+). In terms of biological role, hydrolyzes ribosome-free peptidyl-tRNAs (with 1 or more amino acids incorporated), which drop off the ribosome during protein synthesis, or as a result of ribosome stalling. Functionally, catalyzes the release of premature peptidyl moieties from peptidyl-tRNA molecules trapped in stalled 50S ribosomal subunits, and thus maintains levels of free tRNAs and 50S ribosomes. The chain is Peptidyl-tRNA hydrolase from Aliarcobacter butzleri (strain RM4018) (Arcobacter butzleri).